The following is a 68-amino-acid chain: DNA-directed RNA polymerase subunit Rpo10 (68 aa).

Residues C7, C10, C44, and C45 each coordinate Zn(2+).

The protein belongs to the archaeal Rpo10/eukaryotic RPB10 RNA polymerase subunit family. Part of the RNA polymerase complex. It depends on Zn(2+) as a cofactor.

The protein resides in the cytoplasm. The catalysed reaction is RNA(n) + a ribonucleoside 5'-triphosphate = RNA(n+1) + diphosphate. Its function is as follows. DNA-dependent RNA polymerase (RNAP) catalyzes the transcription of DNA into RNA using the four ribonucleoside triphosphates as substrates. This is DNA-directed RNA polymerase subunit Rpo10 from Methanococcus maripaludis (strain C6 / ATCC BAA-1332).